We begin with the raw amino-acid sequence, 473 residues long: ATP synthase subunit beta (473 aa).

ATP is bound at residue 153-160 (GGAGVGKT).

Belongs to the ATPase alpha/beta chains family. In terms of assembly, F-type ATPases have 2 components, CF(1) - the catalytic core - and CF(0) - the membrane proton channel. CF(1) has five subunits: alpha(3), beta(3), gamma(1), delta(1), epsilon(1). CF(0) has three main subunits: a(1), b(2) and c(9-12). The alpha and beta chains form an alternating ring which encloses part of the gamma chain. CF(1) is attached to CF(0) by a central stalk formed by the gamma and epsilon chains, while a peripheral stalk is formed by the delta and b chains.

The protein resides in the cell inner membrane. The catalysed reaction is ATP + H2O + 4 H(+)(in) = ADP + phosphate + 5 H(+)(out). In terms of biological role, produces ATP from ADP in the presence of a proton gradient across the membrane. The catalytic sites are hosted primarily by the beta subunits. The chain is ATP synthase subunit beta from Rickettsia bellii (strain OSU 85-389).